Consider the following 281-residue polypeptide: Probable endonuclease 4 (281 aa).

Positions 69, 109, 145, 179, 182, 216, 229, 231, and 261 each coordinate Zn(2+).

It belongs to the AP endonuclease 2 family. Requires Zn(2+) as cofactor.

The catalysed reaction is Endonucleolytic cleavage to 5'-phosphooligonucleotide end-products.. Its function is as follows. Endonuclease IV plays a role in DNA repair. It cleaves phosphodiester bonds at apurinic or apyrimidinic (AP) sites, generating a 3'-hydroxyl group and a 5'-terminal sugar phosphate. The sequence is that of Probable endonuclease 4 from Aeromonas hydrophila subsp. hydrophila (strain ATCC 7966 / DSM 30187 / BCRC 13018 / CCUG 14551 / JCM 1027 / KCTC 2358 / NCIMB 9240 / NCTC 8049).